The following is a 288-amino-acid chain: Chitinase 5 (288 aa).

Positions 1 to 29 are cleaved as a signal peptide; that stretch reads MANSPTPTMLAFLALGLALLLSATGQASA. The Chitin-binding type-1 domain occupies 30 to 64; sequence QNCGCQSNMCCSKWGYCGTGKDYCGDGCRSGPCYG. 7 cysteine pairs are disulfide-bonded: C32–C40, C34–C46, C39–C53, C57–C62, C107–C156, C169–C178, and C256–C288. Catalysis depends on E151, which acts as the Proton donor.

It belongs to the glycosyl hydrolase 19 family. Chitinase class IV subfamily. Expressed in sheaths and meristems and at lower levels in roots and leaves.

It carries out the reaction Random endo-hydrolysis of N-acetyl-beta-D-glucosaminide (1-&gt;4)-beta-linkages in chitin and chitodextrins.. In terms of biological role, may function in reproductive organs during embryogenesis and seed maturation. This chain is Chitinase 5 (Cht5), found in Oryza sativa subsp. japonica (Rice).